A 253-amino-acid chain; its full sequence is Troponin T, fast skeletal muscle isoforms (253 aa).

Residues 1 to 25 (MSDTEEVEHGEEEYEEEEEVQEEEV) show a composition bias toward acidic residues. Disordered regions lie at residues 1 to 58 (MSDT…DIQK) and 97 to 178 (RAER…VLAE). Serine 2 carries the N-acetylserine modification. 3 stretches are compositionally biased toward basic and acidic residues: residues 46–58 (PEGE…DIQK), 97–139 (RAER…DDLK), and 167–178 (TARETKKKVLAE).

This sequence belongs to the troponin T family.

Functionally, troponin T is the tropomyosin-binding subunit of troponin, the thin filament regulatory complex which confers calcium-sensitivity to striated muscle actomyosin ATPase activity. The chain is Troponin T, fast skeletal muscle isoforms (TNNT3) from Coturnix japonica (Japanese quail).